The primary structure comprises 419 residues: Divinyl chlorophyllide a 8-vinyl-reductase, chloroplastic (419 aa).

The N-terminal 71 residues, Met1–Val71, are a transit peptide targeting the chloroplast.

It localises to the plastid. The protein resides in the chloroplast. The catalysed reaction is protochlorophyllide a + NADP(+) = 3,8-divinyl protochlorophyllide a + NADPH + H(+). It participates in porphyrin-containing compound metabolism; chlorophyll biosynthesis. Its function is as follows. Catalyzes the conversion of divinyl chlorophyllide to monovinyl chlorophyllide. Reduces the 8-vinyl group of the tetrapyrrole to an ethyl group using NADPH as the reductant. The best substrate is (3,8-divinyl)-chlorophyllide a (DV-Chlidea). Very low activity with (3,8-divinyl)-protochlorophyllide a (DV-Pchlidea) and (3,8-divinyl)-magnesium-protoporphyrin IX monomethyl ester (DV-MPE). No activity with (3,8-divinyl)-magnesium-protoporphyrin IX (DV-Mg-Proto) and (3,8-divinyl)-chlorophyll a (DV-Chla). The protein is Divinyl chlorophyllide a 8-vinyl-reductase, chloroplastic (DVR) of Cucumis sativus (Cucumber).